A 223-amino-acid chain; its full sequence is Uracil-DNA glycosylase (223 aa).

Aspartate 67 serves as the catalytic Proton acceptor.

This sequence belongs to the uracil-DNA glycosylase (UDG) superfamily. UNG family.

It is found in the cytoplasm. The enzyme catalyses Hydrolyzes single-stranded DNA or mismatched double-stranded DNA and polynucleotides, releasing free uracil.. Excises uracil residues from the DNA which can arise as a result of misincorporation of dUMP residues by DNA polymerase or due to deamination of cytosine. The chain is Uracil-DNA glycosylase from Borrelia duttonii (strain Ly).